A 297-amino-acid chain; its full sequence is Craniofacial development protein 1 (297 aa).

Composition is skewed to acidic residues over residues 1 to 18 (MEEFDSEDFSTSEEDEDY) and 25 to 43 (YSEDDVNELVKEDEVDGEE). 2 disordered regions span residues 1-154 (MEEF…ELEK) and 190-221 (FFKQNEKEKPQTNVPAALPSLPAGSGLKRSSG). Residues 48–65 (TKGKKRKAQSIPARKRKQ) show a composition bias toward basic residues. Over residues 69–78 (LEEEEEDANE) the composition is skewed to acidic residues. 3 positions are modified to phosphoserine: Ser80, Ser83, and Ser84. A compositionally biased stretch (basic and acidic residues) spans 93-110 (EQEKGIGAEDARKKKEDE). Phosphoserine is present on Ser114. Residue Lys148 forms a Glycyl lysine isopeptide (Lys-Gly) (interchain with G-Cter in SUMO2) linkage. The segment at 176 to 215 (VTKEVDATSKEAKSFFKQNEKEKPQTNVPAALPSLPAGSG) is hydrophilic. Residues 190-199 (FFKQNEKEKP) show a composition bias toward basic and acidic residues. Phosphoserine is present on Ser214. The BCNT-C domain occupies 216 to 297 (LKRSSGMSNL…RDLRLSKMKP (82 aa)). The residue at position 217 (Lys217) is an N6-methyllysine. Ser248 carries the post-translational modification Phosphoserine.

The protein localises to the chromosome. Its subcellular location is the centromere. It localises to the kinetochore. Functionally, may play a role during embryogenesis. The polypeptide is Craniofacial development protein 1 (CFDP1) (Camelus dromedarius (Dromedary)).